The primary structure comprises 314 residues: MKALTKTDFNFPGQKSVYHGKVRDVYNINGEKLVMVATDRISAFDVVLPEGIPYKGQMLNQIAAKFLDATTDICPNWKMATPDPMVTVGVLCEGFPVEMIVRGYLCGSAWRTYKSGVREICGVKLPDGMRENEKFPEPIVTPTTKAEMGLHDEDISKEEILKQGLATPEEYETLEKYTLALFKRGTEIAAERGLILVDTKYEFGKHNGTIYLMDEIHTPDSSRYFYSDGYQERFEKGEPQKQLSKEFVREWLMENGFQGKDGQKVPEMTPAIVQSISDRYIELFENITGEKFVKEDTSNIAERIEKNVMNFLSK.

Belongs to the SAICAR synthetase family.

The catalysed reaction is 5-amino-1-(5-phospho-D-ribosyl)imidazole-4-carboxylate + L-aspartate + ATP = (2S)-2-[5-amino-1-(5-phospho-beta-D-ribosyl)imidazole-4-carboxamido]succinate + ADP + phosphate + 2 H(+). The protein operates within purine metabolism; IMP biosynthesis via de novo pathway; 5-amino-1-(5-phospho-D-ribosyl)imidazole-4-carboxamide from 5-amino-1-(5-phospho-D-ribosyl)imidazole-4-carboxylate: step 1/2. In Bacteroides thetaiotaomicron (strain ATCC 29148 / DSM 2079 / JCM 5827 / CCUG 10774 / NCTC 10582 / VPI-5482 / E50), this protein is Phosphoribosylaminoimidazole-succinocarboxamide synthase.